Reading from the N-terminus, the 342-residue chain is Galactose mutarotase (342 aa).

Residues 81 to 82 (NR) and H107 each bind beta-D-galactose. A Phosphoserine modification is found at S124. The active-site Proton donor is the H176. Beta-D-galactose-binding positions include 176 to 178 (HSY), D243, Q279, and E307. E307 serves as the catalytic Proton acceptor.

It belongs to the aldose epimerase family. In terms of assembly, monomer.

The protein resides in the cytoplasm. It carries out the reaction alpha-D-galactose = beta-D-galactose. It catalyses the reaction alpha-D-glucose = beta-D-glucose. Its pathway is carbohydrate metabolism; hexose metabolism. It functions in the pathway carbohydrate metabolism; galactose metabolism. Functionally, mutarotase that catalyzes the interconversion of beta-D-galactose and alpha-D-galactose during galactose metabolism. Beta-D-galactose is metabolized in the liver into glucose 1-phosphate, the primary metabolic fuel, by the action of four enzymes that constitute the Leloir pathway: GALM, GALK1 (galactokinase), GALT (galactose-1-phosphate uridylyltransferase) and GALE (UDP-galactose-4'-epimerase). Involved in the maintenance of the equilibrium between the beta- and alpha-anomers of galactose, therefore ensuring a sufficient supply of the alpha-anomer for GALK1. Also active on D-glucose although shows a preference for galactose over glucose. The sequence is that of Galactose mutarotase (GALM) from Bos taurus (Bovine).